The primary structure comprises 179 residues: ATP synthase subunit delta (179 aa).

Belongs to the ATPase delta chain family. F-type ATPases have 2 components, F(1) - the catalytic core - and F(0) - the membrane proton channel. F(1) has five subunits: alpha(3), beta(3), gamma(1), delta(1), epsilon(1). F(0) has three main subunits: a(1), b(2) and c(10-14). The alpha and beta chains form an alternating ring which encloses part of the gamma chain. F(1) is attached to F(0) by a central stalk formed by the gamma and epsilon chains, while a peripheral stalk is formed by the delta and b chains.

The protein resides in the cell inner membrane. In terms of biological role, f(1)F(0) ATP synthase produces ATP from ADP in the presence of a proton or sodium gradient. F-type ATPases consist of two structural domains, F(1) containing the extramembraneous catalytic core and F(0) containing the membrane proton channel, linked together by a central stalk and a peripheral stalk. During catalysis, ATP synthesis in the catalytic domain of F(1) is coupled via a rotary mechanism of the central stalk subunits to proton translocation. Functionally, this protein is part of the stalk that links CF(0) to CF(1). It either transmits conformational changes from CF(0) to CF(1) or is implicated in proton conduction. The sequence is that of ATP synthase subunit delta from Koribacter versatilis (strain Ellin345).